The chain runs to 379 residues: Cytochrome b (379 aa).

The next 4 helical transmembrane spans lie at 33–53 (FGSL…FLAM), 77–98 (WLIR…YIHI), 113–133 (WNIG…GYVL), and 178–198 (FFAF…VHLL). Heme b-binding residues include His83 and His97. Residues His182 and His196 each coordinate heme b. Position 201 (His201) interacts with a ubiquinone. 4 consecutive transmembrane segments (helical) span residues 226–246 (TKDF…VLYF), 288–308 (LGGV…PYIH), 320–340 (ISQF…WIGG), and 347–367 (FIII…IXMX).

Belongs to the cytochrome b family. As to quaternary structure, the cytochrome bc1 complex contains 11 subunits: 3 respiratory subunits (MT-CYB, CYC1 and UQCRFS1), 2 core proteins (UQCRC1 and UQCRC2) and 6 low-molecular weight proteins (UQCRH/QCR6, UQCRB/QCR7, UQCRQ/QCR8, UQCR10/QCR9, UQCR11/QCR10 and a cleavage product of UQCRFS1). This cytochrome bc1 complex then forms a dimer. Heme b serves as cofactor.

It localises to the mitochondrion inner membrane. Component of the ubiquinol-cytochrome c reductase complex (complex III or cytochrome b-c1 complex) that is part of the mitochondrial respiratory chain. The b-c1 complex mediates electron transfer from ubiquinol to cytochrome c. Contributes to the generation of a proton gradient across the mitochondrial membrane that is then used for ATP synthesis. The sequence is that of Cytochrome b (MT-CYB) from Thomomys umbrinus (Southern pocket gopher).